A 496-amino-acid polypeptide reads, in one-letter code: Putative aldehyde dehydrogenase-like protein C922.07c (496 aa).

An NAD(+)-binding site is contributed by 241–246 (GSTKVG). E263 acts as the Proton acceptor in catalysis. C297 functions as the Nucleophile in the catalytic mechanism.

This sequence belongs to the aldehyde dehydrogenase family.

The protein localises to the cytoplasm. It is found in the nucleus. In Schizosaccharomyces pombe (strain 972 / ATCC 24843) (Fission yeast), this protein is Putative aldehyde dehydrogenase-like protein C922.07c.